The sequence spans 283 residues: MMRIGIIARFDVAEAVEIAERVASFLLNRGVEITVDLKLTEELPQLREYGEDIRNMDADMILTIGGDGTILRTRSLIEDKEIPILGINMGTVGFLTEVDPENVFSALEAVLRGEYAVEKRTLLSVYHNDELPSALNEVVLMTRRPAKMLHIEISVDDEVVEELRADGIIIATPSGSTAYSMSAGGPIVDPRVEAFLIVPICPFKLSARPLVVSNKSVIRVKLLRKGKKAIAVIDGQYEEEINHMDEVIFRKSERKAHFVRLSKDFYRKVREKLIEGGIDSIKG.

Asp-67 functions as the Proton acceptor in the catalytic mechanism. Residues 67 to 68 (DG), Arg-72, 136 to 137 (NE), Lys-147, Arg-164, Asp-166, 177 to 182 (TAYSMS), and Gln-236 each bind NAD(+).

Belongs to the NAD kinase family. The cofactor is a divalent metal cation.

It localises to the cytoplasm. The catalysed reaction is NAD(+) + ATP = ADP + NADP(+) + H(+). Involved in the regulation of the intracellular balance of NAD and NADP, and is a key enzyme in the biosynthesis of NADP. Catalyzes specifically the phosphorylation on 2'-hydroxyl of the adenosine moiety of NAD to yield NADP. This is NAD kinase from Methanothermobacter thermautotrophicus (strain ATCC 29096 / DSM 1053 / JCM 10044 / NBRC 100330 / Delta H) (Methanobacterium thermoautotrophicum).